We begin with the raw amino-acid sequence, 448 residues long: Histidinol dehydrogenase (448 aa).

Positions 136, 197, and 220 each coordinate NAD(+). Substrate is bound by residues serine 243, glutamine 265, and histidine 268. Residues glutamine 265 and histidine 268 each coordinate Zn(2+). Active-site proton acceptor residues include glutamate 333 and histidine 334. Substrate contacts are provided by histidine 334, aspartate 367, glutamate 421, and histidine 426. Residue aspartate 367 coordinates Zn(2+). Histidine 426 contributes to the Zn(2+) binding site.

This sequence belongs to the histidinol dehydrogenase family. Zn(2+) serves as cofactor.

The catalysed reaction is L-histidinol + 2 NAD(+) + H2O = L-histidine + 2 NADH + 3 H(+). Its pathway is amino-acid biosynthesis; L-histidine biosynthesis; L-histidine from 5-phospho-alpha-D-ribose 1-diphosphate: step 9/9. Functionally, catalyzes the sequential NAD-dependent oxidations of L-histidinol to L-histidinaldehyde and then to L-histidine. The protein is Histidinol dehydrogenase of Pseudomonas syringae pv. syringae (strain B728a).